A 463-amino-acid polypeptide reads, in one-letter code: Glutamate--tRNA ligase 1 (463 aa).

Positions P10–G20 match the 'HIGH' region motif. The 'KMSKS' region motif lies at K238–R242. K241 provides a ligand contact to ATP.

The protein belongs to the class-I aminoacyl-tRNA synthetase family. Glutamate--tRNA ligase type 1 subfamily. Monomer.

It is found in the cytoplasm. It catalyses the reaction tRNA(Glu) + L-glutamate + ATP = L-glutamyl-tRNA(Glu) + AMP + diphosphate. Catalyzes the attachment of glutamate to tRNA(Glu) in a two-step reaction: glutamate is first activated by ATP to form Glu-AMP and then transferred to the acceptor end of tRNA(Glu). In Helicobacter pylori (strain G27), this protein is Glutamate--tRNA ligase 1.